The chain runs to 227 residues: ATP phosphoribosyltransferase (227 aa).

It belongs to the ATP phosphoribosyltransferase family. Short subfamily. In terms of assembly, heteromultimer composed of HisG and HisZ subunits.

The protein localises to the cytoplasm. The catalysed reaction is 1-(5-phospho-beta-D-ribosyl)-ATP + diphosphate = 5-phospho-alpha-D-ribose 1-diphosphate + ATP. It functions in the pathway amino-acid biosynthesis; L-histidine biosynthesis; L-histidine from 5-phospho-alpha-D-ribose 1-diphosphate: step 1/9. Catalyzes the condensation of ATP and 5-phosphoribose 1-diphosphate to form N'-(5'-phosphoribosyl)-ATP (PR-ATP). Has a crucial role in the pathway because the rate of histidine biosynthesis seems to be controlled primarily by regulation of HisG enzymatic activity. This Nitrosospira multiformis (strain ATCC 25196 / NCIMB 11849 / C 71) protein is ATP phosphoribosyltransferase.